Here is a 135-residue protein sequence, read N- to C-terminus: Small ribosomal subunit protein uS12 (135 aa).

The residue at position 89 (aspartate 89) is a 3-methylthioaspartic acid. The disordered stretch occupies residues 101–135 (SLDTSGVADRKQSRSKYGAKQPKAGAAAPAKGKGR). Positions 118–135 (GAKQPKAGAAAPAKGKGR) are enriched in low complexity.

Belongs to the universal ribosomal protein uS12 family. In terms of assembly, part of the 30S ribosomal subunit. Contacts proteins S8 and S17. May interact with IF1 in the 30S initiation complex.

Its function is as follows. With S4 and S5 plays an important role in translational accuracy. Functionally, interacts with and stabilizes bases of the 16S rRNA that are involved in tRNA selection in the A site and with the mRNA backbone. Located at the interface of the 30S and 50S subunits, it traverses the body of the 30S subunit contacting proteins on the other side and probably holding the rRNA structure together. The combined cluster of proteins S8, S12 and S17 appears to hold together the shoulder and platform of the 30S subunit. The chain is Small ribosomal subunit protein uS12 from Chlorobium limicola (strain DSM 245 / NBRC 103803 / 6330).